The primary structure comprises 348 residues: Elongation factor Ts (348 aa).

The involved in Mg(2+) ion dislocation from EF-Tu stretch occupies residues 80–83; the sequence is TDFV.

This sequence belongs to the EF-Ts family.

The protein resides in the cytoplasm. Associates with the EF-Tu.GDP complex and induces the exchange of GDP to GTP. It remains bound to the aminoacyl-tRNA.EF-Tu.GTP complex up to the GTP hydrolysis stage on the ribosome. In Streptococcus mutans serotype c (strain ATCC 700610 / UA159), this protein is Elongation factor Ts.